A 129-amino-acid chain; its full sequence is Phosphoribosyl-AMP cyclohydrolase (129 aa).

Residue Asp-85 participates in Mg(2+) binding. Cys-86 is a Zn(2+) binding site. Residues Asp-87 and Asp-89 each coordinate Mg(2+). Zn(2+)-binding residues include Cys-102 and Cys-109.

This sequence belongs to the PRA-CH family. Homodimer. The cofactor is Mg(2+). Zn(2+) is required as a cofactor.

It localises to the cytoplasm. The catalysed reaction is 1-(5-phospho-beta-D-ribosyl)-5'-AMP + H2O = 1-(5-phospho-beta-D-ribosyl)-5-[(5-phospho-beta-D-ribosylamino)methylideneamino]imidazole-4-carboxamide. It functions in the pathway amino-acid biosynthesis; L-histidine biosynthesis; L-histidine from 5-phospho-alpha-D-ribose 1-diphosphate: step 3/9. In terms of biological role, catalyzes the hydrolysis of the adenine ring of phosphoribosyl-AMP. The chain is Phosphoribosyl-AMP cyclohydrolase from Methanococcus maripaludis (strain C7 / ATCC BAA-1331).